A 322-amino-acid polypeptide reads, in one-letter code: tRNA U34 carboxymethyltransferase (322 aa).

Carboxy-S-adenosyl-L-methionine is bound by residues Lys91, Trp105, Lys110, Gly129, 179 to 180 (LE), Met195, Tyr199, and Arg314.

This sequence belongs to the class I-like SAM-binding methyltransferase superfamily. CmoB family. Homotetramer.

The catalysed reaction is carboxy-S-adenosyl-L-methionine + 5-hydroxyuridine(34) in tRNA = 5-carboxymethoxyuridine(34) in tRNA + S-adenosyl-L-homocysteine + H(+). Catalyzes carboxymethyl transfer from carboxy-S-adenosyl-L-methionine (Cx-SAM) to 5-hydroxyuridine (ho5U) to form 5-carboxymethoxyuridine (cmo5U) at position 34 in tRNAs. This Pseudomonas paraeruginosa (strain DSM 24068 / PA7) (Pseudomonas aeruginosa (strain PA7)) protein is tRNA U34 carboxymethyltransferase.